A 33-amino-acid polypeptide reads, in one-letter code: NAD-reducing hydrogenase HoxS subunit gamma (33 aa).

In terms of domain architecture, 2Fe-2S ferredoxin-type spans 1–33; that stretch reads SIEIEIDGVTVTTEESRTLVDVAAEAGVYIPTL.

Belongs to the complex I 75 kDa subunit family. As to quaternary structure, tetramer of an alpha and a gamma subunits (flavin-containing dimer), and a delta and a nickel-containing beta subunits (hydrogenase dimer). [4Fe-4S] cluster serves as cofactor.

It localises to the cytoplasm. The catalysed reaction is H2 + NAD(+) = NADH + H(+). Subunits alpha and gamma of HoxS constitute an NADH--oxidoreductase. This Rhodococcus opacus (Nocardia opaca) protein is NAD-reducing hydrogenase HoxS subunit gamma (hoxU).